A 381-amino-acid polypeptide reads, in one-letter code: Succinyl-diaminopimelate desuccinylase (381 aa).

Position 69 (His69) interacts with Zn(2+). Asp71 is a catalytic residue. A Zn(2+)-binding site is contributed by Asp103. Catalysis depends on Glu137, which acts as the Proton acceptor. Zn(2+)-binding residues include Glu138, Glu166, and His355.

It belongs to the peptidase M20A family. DapE subfamily. As to quaternary structure, homodimer. It depends on Zn(2+) as a cofactor. Requires Co(2+) as cofactor.

It catalyses the reaction N-succinyl-(2S,6S)-2,6-diaminopimelate + H2O = (2S,6S)-2,6-diaminopimelate + succinate. The protein operates within amino-acid biosynthesis; L-lysine biosynthesis via DAP pathway; LL-2,6-diaminopimelate from (S)-tetrahydrodipicolinate (succinylase route): step 3/3. In terms of biological role, catalyzes the hydrolysis of N-succinyl-L,L-diaminopimelic acid (SDAP), forming succinate and LL-2,6-diaminopimelate (DAP), an intermediate involved in the bacterial biosynthesis of lysine and meso-diaminopimelic acid, an essential component of bacterial cell walls. This is Succinyl-diaminopimelate desuccinylase from Rickettsia rickettsii (strain Iowa).